A 533-amino-acid chain; its full sequence is Beta-glucosidase 10 (533 aa).

Positions Met1–Ala23 are cleaved as a signal peptide. A beta-D-glucoside is bound at residue Gln53. N-linked (GlcNAc...) asparagine glycosylation is present at Asn122. A beta-D-glucoside contacts are provided by residues His157 and Asn202–Glu203. The active-site Proton donor is Glu203. Cys222 and Cys230 form a disulfide bridge. Position 369 (Tyr369) interacts with a beta-D-glucoside. An N-linked (GlcNAc...) asparagine glycan is attached at Asn384. Position 440 (Glu440) interacts with a beta-D-glucoside. Glu440 serves as the catalytic Nucleophile. The N-linked (GlcNAc...) asparagine glycan is linked to Asn448. Residues Trp489, Glu496 to Trp497, and Phe505 each bind a beta-D-glucoside.

This sequence belongs to the glycosyl hydrolase 1 family.

The catalysed reaction is Hydrolysis of terminal, non-reducing beta-D-glucosyl residues with release of beta-D-glucose.. In Oryza sativa subsp. japonica (Rice), this protein is Beta-glucosidase 10 (BGLU10).